The chain runs to 236 residues: Cancer/testis antigen 55 (236 aa).

The interval 57–84 (RSSADVETGDNPLKAEPNLPAAVEEQSP) is disordered.

Interacts with GABARAP; this interaction may be important for GABARAP protein stability. Interacts with LAMP2; this interaction may be important for LAMP2 protein stability. As to expression, expressed in spermatozoa (at protein level).

It is found in the cytoplasm. Its subcellular location is the cytoplasmic vesicle. The protein resides in the secretory vesicle. It localises to the acrosome. The protein localises to the cell projection. It is found in the cilium. Its subcellular location is the flagellum. In terms of biological role, plays a role in spermatogenesis, possibly acting in the regulation of the autophagy pathway. The protein is Cancer/testis antigen 55 (Ct55) of Mus musculus (Mouse).